A 411-amino-acid chain; its full sequence is RING-H2 finger protein ATL65 (411 aa).

Positions Met1–Ser32 are disordered. Positions Ser10–Ser21 are enriched in low complexity. Residues Leu36–Val56 traverse the membrane as a helical segment. The segment at Cys156 to Arg198 adopts an RING-type; atypical zinc-finger fold.

It belongs to the RING-type zinc finger family. ATL subfamily.

It localises to the membrane. It catalyses the reaction S-ubiquitinyl-[E2 ubiquitin-conjugating enzyme]-L-cysteine + [acceptor protein]-L-lysine = [E2 ubiquitin-conjugating enzyme]-L-cysteine + N(6)-ubiquitinyl-[acceptor protein]-L-lysine.. Its pathway is protein modification; protein ubiquitination. The polypeptide is RING-H2 finger protein ATL65 (ATL65) (Arabidopsis thaliana (Mouse-ear cress)).